The primary structure comprises 230 residues: MIRVILTDIEGTTSSISFVHDVLFPYASEHLPEFIRANHHTLPAVAEQLVRVAEISGTDRKDIDGLINVLQEWIAEDRKEGALKALQGMVWEQGYHSGELKGHIYPDAADYLKRWHDRGLRLFVYSSGSVKAQKLIFGHSNEGDFTVFFSGYFDTAVGGKKESQSYRNILAELGVDAGTVLFLSDVEEELRAAEEAGLKTAWLVREGELPDTARVVARDFSEVDALLRKR.

It belongs to the HAD-like hydrolase superfamily. MasA/MtnC family. As to quaternary structure, monomer. It depends on Mg(2+) as a cofactor.

The catalysed reaction is 5-methylsulfanyl-2,3-dioxopentyl phosphate + H2O = 1,2-dihydroxy-5-(methylsulfanyl)pent-1-en-3-one + phosphate. Its pathway is amino-acid biosynthesis; L-methionine biosynthesis via salvage pathway; L-methionine from S-methyl-5-thio-alpha-D-ribose 1-phosphate: step 3/6. The protein operates within amino-acid biosynthesis; L-methionine biosynthesis via salvage pathway; L-methionine from S-methyl-5-thio-alpha-D-ribose 1-phosphate: step 4/6. Its function is as follows. Bifunctional enzyme that catalyzes the enolization of 2,3-diketo-5-methylthiopentyl-1-phosphate (DK-MTP-1-P) into the intermediate 2-hydroxy-3-keto-5-methylthiopentenyl-1-phosphate (HK-MTPenyl-1-P), which is then dephosphorylated to form the acireductone 1,2-dihydroxy-3-keto-5-methylthiopentene (DHK-MTPene). The protein is Enolase-phosphatase E1 of Marinobacter nauticus (strain ATCC 700491 / DSM 11845 / VT8) (Marinobacter aquaeolei).